The following is a 259-amino-acid chain: Alpha-acetolactate decarboxylase (259 aa).

It belongs to the alpha-acetolactate decarboxylase family.

It carries out the reaction (2S)-2-acetolactate + H(+) = (R)-acetoin + CO2. Its pathway is polyol metabolism; (R,R)-butane-2,3-diol biosynthesis; (R,R)-butane-2,3-diol from pyruvate: step 2/3. Converts acetolactate into acetoin, which can be excreted by the cells. This may be a mechanism for controlling the internal pH of cells in the stationary stage. The sequence is that of Alpha-acetolactate decarboxylase (budA) from Raoultella terrigena (Klebsiella terrigena).